Here is a 453-residue protein sequence, read N- to C-terminus: MAAVVLENGVLSRKLSDFGQETSYIEDNSNQNGAVSLIFSLKEEVGALAKVLRLFEENEINLTHIESRPSRLNKDEYEFFTYLDKRSKPVLGSIIKSLRNDIGATVHELSRDKEKNTVPWFPRTIQELDRFANQILSYGAELDADHPGFKDPVYRARRKQFADIAYNYRHGQPIPRVEYTEEERKTWGTVFRTLKALYKTHACYEHNHIFPLLEKYCGFREDNIPQLEDVSQFLQTCTGFRLRPVAGLLSSRDFLGGLAFRVFHCTQYIRHGSKPMYTPEPDICHELLGHVPLFSDRSFAQFSQEIGLASLGAPDEYIEKLATIYWFTVEFGLCKEGDSIKAYGAGLLSSFGELQYCLSDKPKLLPLELEKTACQEYTVTEFQPLYYVAESFNDAKEKVRTFAATIPRPFSVRYDPYTQRVEVLDNTQQLKILADSINSEVGILCHALQKIKS.

N-acetylalanine is present on A2. S16 is subject to Phosphoserine. One can recognise an ACT domain in the interval 36 to 114 (SLIFSLKEEV…TVHELSRDKE (79 aa)). Fe cation contacts are provided by H285, H290, and E330.

This sequence belongs to the biopterin-dependent aromatic amino acid hydroxylase family. In terms of assembly, homodimer and homotetramer. Fe(2+) is required as a cofactor. In terms of processing, phosphorylation at Ser-16 increases basal activity and facilitates activation by the substrate phenylalanine.

The enzyme catalyses (6R)-L-erythro-5,6,7,8-tetrahydrobiopterin + L-phenylalanine + O2 = (4aS,6R)-4a-hydroxy-L-erythro-5,6,7,8-tetrahydrobiopterin + L-tyrosine. It functions in the pathway amino-acid degradation; L-phenylalanine degradation; acetoacetate and fumarate from L-phenylalanine: step 1/6. N-terminal region of PAH is thought to contain allosteric binding sites for phenylalanine and to constitute an 'inhibitory' domain that regulates the activity of a catalytic domain in the C-terminal portion of the molecule. Its function is as follows. Catalyzes the hydroxylation of L-phenylalanine to L-tyrosine. The chain is Phenylalanine-4-hydroxylase (Pah) from Mus musculus (Mouse).